Here is a 148-residue protein sequence, read N- to C-terminus: uncharacterized protein (148 aa).

The span at 1–17 (MCPPVRQRPAQAPPAKR) shows a compositional bias: low complexity. 2 disordered regions span residues 1-86 (MCPP…VQSP) and 122-148 (RAHR…TSPC). The segment covering 38–57 (RPPKMQRRPRPPVAKRRRFP) has biased composition (basic residues). Polar residues predominate over residues 134–148 (QSRQRPSPDSQTSPC).

This sequence belongs to the Epstein-Barr virus BLLF2 family.

This is an uncharacterized protein from Homo sapiens (Human).